The chain runs to 219 residues: Adenylate kinase (219 aa).

10–15 (GAGKGT) provides a ligand contact to ATP. Positions 30-59 (STGDMLRAAVKAETPVGLEAKKVMDAGQLV) are NMP. AMP-binding positions include T31, R36, 57 to 59 (QLV), 85 to 88 (GFPR), and Q92. Positions 122–159 (GRRVHLSSGRTYHVLFNPPKQEGLDDETGEPLVQRADD) are LID. ATP contacts are provided by residues R123 and 132–133 (TY). The AMP site is built by R156 and R167. G203 provides a ligand contact to ATP.

The protein belongs to the adenylate kinase family. Monomer.

Its subcellular location is the cytoplasm. It carries out the reaction AMP + ATP = 2 ADP. Its pathway is purine metabolism; AMP biosynthesis via salvage pathway; AMP from ADP: step 1/1. Functionally, catalyzes the reversible transfer of the terminal phosphate group between ATP and AMP. Plays an important role in cellular energy homeostasis and in adenine nucleotide metabolism. In Chlorobium limicola (strain DSM 245 / NBRC 103803 / 6330), this protein is Adenylate kinase.